We begin with the raw amino-acid sequence, 460 residues long: Ammonium transporter Rh type C (460 aa).

The Cytoplasmic portion of the chain corresponds to 1-9 (MAWNTNLRW). A helical membrane pass occupies residues 10–30 (RLPLTCLLLQVIMVILFGVFV). Topologically, residues 31–61 (RYDPDADAHWIDERLGRNISSDMDNEFYYRY) are extracellular. An N-linked (GlcNAc...) asparagine glycan is attached at asparagine 48. The chain crosses the membrane as a helical span at residues 62–82 (PSFQDVHVMIFVGFGFLMTFL). Residues 83–86 (QRYG) lie on the Cytoplasmic side of the membrane. Residues 87 to 107 (FSSVGFNFLLAAFGIQWALLM) traverse the membrane as a helical segment. Residues 108 to 125 (QGWLHSFHSGYIVLGVEN) lie on the Extracellular side of the membrane. Residues 126–145 (LINADFCVGSVCVAFGAVLG) form a helical membrane-spanning segment. The Cytoplasmic portion of the chain corresponds to 146-151 (KVSPVQ). Residues 152-174 (LLIMTLFQVTLFSVNEFILLNLL) traverse the membrane as a helical segment. Residues 175 to 179 (EVKDA) lie on the Extracellular side of the membrane. A helical membrane pass occupies residues 180–200 (GGSMTIHTFGAYFGLTVTWIL). At 201 to 219 (YRPNLYQSKERQSSVYHSD) the chain is on the cytoplasmic side. The helical transmembrane segment at 220–240 (LFAMIGTLFLWMYWPSFNSAV) threads the bilayer. The Extracellular portion of the chain corresponds to 241–251 (SHHGDAQHRAA). Residues 252–272 (INTYCSLAACVLTSVALSSAL) traverse the membrane as a helical segment. Residues 273-285 (HKKGKLDMVHIQN) lie on the Cytoplasmic side of the membrane. The chain crosses the membrane as a helical span at residues 286–306 (ATLAGGVAVGTAAEMMLMPYG). Serine 307 is a topological domain (extracellular). Residues 308-328 (LIVGFICGIISTLGFVYLTPF) traverse the membrane as a helical segment. Topologically, residues 329–340 (LESRLRIQDTCG) are cytoplasmic. The helical transmembrane segment at 341–361 (IHNLHGMPGIIGGIVGAVTAA) threads the bilayer. Residues 362–396 (SANTQQYGQKGLAHAFDIDATKTTWTASMQGSFQA) are Extracellular-facing. A helical transmembrane segment spans residues 397–417 (AGLFVSLAMALVGGLIVGVIL). Residues 418-460 (KLPFWGQPADENCFEDAIYWEIPEDQKSLVSRSEDPTLRPTEP) lie on the Cytoplasmic side of the membrane.

The protein belongs to the ammonium transporter (TC 2.A.49) family. Rh subfamily. As to quaternary structure, homotrimer. Post-translationally, N-glycosylated.

It localises to the cell membrane. The protein resides in the apical cell membrane. The enzyme catalyses NH4(+)(in) = NH4(+)(out). The catalysed reaction is methylamine(out) = methylamine(in). It catalyses the reaction CO2(out) = CO2(in). Ammonium transporter involved in the maintenance of acid-base homeostasis. Transports ammonium and its related derivative methylammonium across the plasma membrane of epithelial cells likely contributing to renal transepithelial ammonia transport and ammonia metabolism. Postulated to primarily mediate an electroneutral bidirectional transport of NH3 ammonia species according to a mechanism that implies interaction of an NH4(+) ion with acidic residues of the pore entry followed by dissociation of NH4(+) into NH3 and H(+). As a result NH3 transits through the central pore and is protonated on the extracellular side reforming NH4(+). May act as a CO2 channel providing for renal acid secretion. This Sus scrofa (Pig) protein is Ammonium transporter Rh type C (RHCG).